Reading from the N-terminus, the 93-residue chain is Pyrimidine/purine nucleoside phosphorylase (93 aa).

The protein belongs to the nucleoside phosphorylase PpnP family.

The catalysed reaction is a purine D-ribonucleoside + phosphate = a purine nucleobase + alpha-D-ribose 1-phosphate. It carries out the reaction adenosine + phosphate = alpha-D-ribose 1-phosphate + adenine. It catalyses the reaction cytidine + phosphate = cytosine + alpha-D-ribose 1-phosphate. The enzyme catalyses guanosine + phosphate = alpha-D-ribose 1-phosphate + guanine. The catalysed reaction is inosine + phosphate = alpha-D-ribose 1-phosphate + hypoxanthine. It carries out the reaction thymidine + phosphate = 2-deoxy-alpha-D-ribose 1-phosphate + thymine. It catalyses the reaction uridine + phosphate = alpha-D-ribose 1-phosphate + uracil. The enzyme catalyses xanthosine + phosphate = alpha-D-ribose 1-phosphate + xanthine. Catalyzes the phosphorolysis of diverse nucleosides, yielding D-ribose 1-phosphate and the respective free bases. Can use uridine, adenosine, guanosine, cytidine, thymidine, inosine and xanthosine as substrates. Also catalyzes the reverse reactions. This is Pyrimidine/purine nucleoside phosphorylase from Vibrio vulnificus (strain CMCP6).